The following is a 285-amino-acid chain: Methyl-CpG-binding domain protein 3 (285 aa).

The region spanning 1-69 (MERKRWECPA…STFDFRTGKM (69 aa)) is the MBD domain. Residue serine 56 is modified to Phosphoserine. Lysine 73 participates in a covalent cross-link: Glycyl lysine isopeptide (Lys-Gly) (interchain with G-Cter in SUMO2). Serine 85 bears the Phosphoserine mark. Residues lysine 90 and lysine 92 each participate in a glycyl lysine isopeptide (Lys-Gly) (interchain with G-Cter in SUMO2) cross-link. Serine 144 carries the post-translational modification Phosphoserine. Positions 221–279 (TDDDIRKQEELVQQVRKRLEEALMADMLAHVEELARDGEAPLDKACAEEEEEEEEEEEE) form a coiled coil. Positions 255–267 (ARDGEAPLDKACA) are enriched in basic and acidic residues. The interval 255–285 (ARDGEAPLDKACAEEEEEEEEEEEEPEPERV) is disordered. The span at 268–285 (EEEEEEEEEEEEPEPERV) shows a compositional bias: acidic residues.

In terms of assembly, heterodimer (via N-terminus) with MBD2. Component of the MeCP1 histone deacetylase complex. Component of the nucleosome remodeling and deacetylase (NuRD) repressor complex, composed of core proteins MTA1, MTA2, MTA3, RBBP4, RBBP7, HDAC1, HDAC2, MBD2, MBD3, and peripherally associated proteins CDK2AP1, CDK2AP2, GATAD2A, GATAD2B, CHD3, CHD4 and CHD5. The exact stoichiometry of the NuRD complex is unknown, and some subunits such as MBD2 and MBD3, GATAD2A and GATAD2B, and CHD3, CHD4 and CHD5 define mutually exclusive NuRD complexes. Interacts with MBD3L2 (via N-terminus); the interaction is direct. Interacts with BCL6. Interacts with CDK2AP1. Interacts with HDAC1. Interacts with MTA2. Interacts with DNMT1. Interacts with GATAD2A. Interacts with GATAD2B. Does not interact with PWWP2A. Does not interact with PWWP2B. In terms of tissue distribution, highly expressed in brain, heart, kidney, liver, lung, skeletal muscle, spleen and testis. Detected at lower levels in embryonic stem cells.

It is found in the nucleus. It localises to the chromosome. Its function is as follows. Acts as a component of the histone deacetylase NuRD complex which participates in the remodeling of chromatin. Acts as transcriptional repressor and plays a role in gene silencing. Does not bind methylated DNA by itself. Binds to a lesser degree DNA containing unmethylated CpG dinucleotides. Recruits histone deacetylases and DNA methyltransferases. In Mus musculus (Mouse), this protein is Methyl-CpG-binding domain protein 3 (Mbd3).